A 41-amino-acid chain; its full sequence is Disintegrin viperistatin (41 aa).

4 disulfide bridges follow: Cys-1–Cys-10, Cys-6–Cys-29, Cys-7–Cys-34, and Cys-19–Cys-36. The region spanning 1-41 (CTTGPCCRQCKLKPAGTTCWKTSRTSHYCTGKSCDCPVYQG) is the Disintegrin domain. Positions 21 to 23 (KTS) match the Cell attachment site; atypical (KTS) motif.

As to quaternary structure, monomer. Expressed by the venom gland.

It localises to the secreted. Functionally, potent and highly selective inhibitor of alpha-1/beta-1 (ITGA1/ITGB1) integrin binding to collagen I and IV. Is about 25-fold more potent than obtustatin inhibiting the binding of this integrin to collagen IV. This Daboia palaestinae (Palestine viper) protein is Disintegrin viperistatin.